Reading from the N-terminus, the 444-residue chain is MSNMTPKEIKHELDRHIIGQDNAKRAVAIALRNRWRRMQLDKEMRQEVTPKNILMIGPTGVGKTEIARRLAKLANAPFIKVEATKFTEVGYVGKEVESIVRDLVDVAIKLTREEEMAKVAHKAEDLAEDRILDILIPPAKTGNDWETVKTEDSATRQSFRKKLREGKLDDKEVEIDLPAPQIGVEIMAPPGMEEMTNQLQGMFQSMSGKDKTKKRKMKIKEALKVLIESEAAKLVNEEDIKEKALFSAENNGIIFIDEIDKICKRGDSAGPDVSREGVQRDLLPLIEGSTVSTKHGMVKTDHMLFIASGAFQVAKPSDLIPELQGRLPIRVELEALTEEDLAKILTEPKASLSEQYKALLATEGITLQFSKDGIDKIAKSAWHVNETTENIGARRLHTLMERILDELSYEASERKGESITIDENYVANTLDDLLENEDLSRYIL.

ATP contacts are provided by residues I18, G60–E65, D257, E322, and R394.

The protein belongs to the ClpX chaperone family. HslU subfamily. A double ring-shaped homohexamer of HslV is capped on each side by a ring-shaped HslU homohexamer. The assembly of the HslU/HslV complex is dependent on binding of ATP.

Its subcellular location is the cytoplasm. In terms of biological role, ATPase subunit of a proteasome-like degradation complex; this subunit has chaperone activity. The binding of ATP and its subsequent hydrolysis by HslU are essential for unfolding of protein substrates subsequently hydrolyzed by HslV. HslU recognizes the N-terminal part of its protein substrates and unfolds these before they are guided to HslV for hydrolysis. In Psychromonas ingrahamii (strain DSM 17664 / CCUG 51855 / 37), this protein is ATP-dependent protease ATPase subunit HslU.